Here is a 289-residue protein sequence, read N- to C-terminus: Nucleotide-binding protein CHY_0272 (289 aa).

ATP is bound at residue 8–15 (GLSGAGKT). 59–62 (DVRG) serves as a coordination point for GTP.

It belongs to the RapZ-like family.

Its function is as follows. Displays ATPase and GTPase activities. The polypeptide is Nucleotide-binding protein CHY_0272 (Carboxydothermus hydrogenoformans (strain ATCC BAA-161 / DSM 6008 / Z-2901)).